Consider the following 196-residue polypeptide: Putative AAA family ATPase L572 (196 aa).

32 to 39 serves as a coordination point for ATP; that stretch reads NAVNCKET.

Belongs to the AAA ATPase family.

In Acanthamoeba polyphaga mimivirus (APMV), this protein is Putative AAA family ATPase L572.